Consider the following 304-residue polypeptide: MTKVRKAIIPAAGLGTRFLPATKALAKEMLPIVDKPTIQFIVEEALKSGIEEILVVTGKAKRSIEDHFDSNFELEYNLQAKGKNELLKLVDETTAINLHFIRQSHPRGLGDAVLQAKAFVGNEPFVVMLGDDLMDITNASAKPLTKQLMEDYDKTHASTIAVMKVPHEDVSSYGVIAPQGKAVKGLYSVDTFVEKPQPEDAPSDLAIIGRYLLTPEIFDILERQVPGAGNEVQLTDAIDTLNKTQRVFAREFKGNRYDVGDKFGFMKTSIDYALEHPQVKEDLKNYIIKLGKALEKSKVPTHSK.

It belongs to the UDPGP type 2 family.

The catalysed reaction is alpha-D-glucose 1-phosphate + UTP + H(+) = UDP-alpha-D-glucose + diphosphate. The protein operates within carbohydrate metabolism; nucleotide-sugar metabolism. This is UTP--glucose-1-phosphate uridylyltransferase 1 (hasC1) from Streptococcus pyogenes serotype M3 (strain ATCC BAA-595 / MGAS315).